Here is a 260-residue protein sequence, read N- to C-terminus: Type III pantothenate kinase (260 aa).

Aspartate 6–valine 13 lines the ATP pocket. Glycine 107–arginine 110 contributes to the substrate binding site. Residue aspartate 109 is the Proton acceptor of the active site. K(+) is bound at residue aspartate 129. Threonine 132 is an ATP binding site. Threonine 184 provides a ligand contact to substrate.

It belongs to the type III pantothenate kinase family. In terms of assembly, homodimer. NH4(+) is required as a cofactor. Requires K(+) as cofactor.

It localises to the cytoplasm. The enzyme catalyses (R)-pantothenate + ATP = (R)-4'-phosphopantothenate + ADP + H(+). It functions in the pathway cofactor biosynthesis; coenzyme A biosynthesis; CoA from (R)-pantothenate: step 1/5. Its function is as follows. Catalyzes the phosphorylation of pantothenate (Pan), the first step in CoA biosynthesis. In Ruegeria sp. (strain TM1040) (Silicibacter sp.), this protein is Type III pantothenate kinase.